The sequence spans 483 residues: Salicylaldehyde dehydrogenase (483 aa).

Position 228 to 233 (228 to 233 (GSTRVG)) interacts with NAD(+). Residues Glu250 and Cys284 contribute to the active site.

This sequence belongs to the aldehyde dehydrogenase family.

The enzyme catalyses salicylaldehyde + NAD(+) + H2O = salicylate + NADH + 2 H(+). It functions in the pathway aromatic compound metabolism; naphthalene degradation. In Pseudomonas putida (Arthrobacter siderocapsulatus), this protein is Salicylaldehyde dehydrogenase (nahF).